The sequence spans 340 residues: Immunoglobulin-binding protein 1 (340 aa).

Residues 47 to 61 (LELLEKAAGMLSQLD) form the UIM domain. The interaction with PPP2CA stretch occupies residues 99 to 203 (RLDHLQRARE…YLLHLRRWIG (105 aa)). Disordered stretches follow at residues 221-242 (DKDSPREESACQSSLPEKPPMK) and 281-340 (LPDR…QNMG). The tract at residues 226–291 (REESACQSSL…PDRGIAKPPS (66 aa)) is interaction with MID1. K242 bears the N6-acetyllysine mark. The segment covering 292 to 301 (ADFQRAAQQQ) has biased composition (low complexity). Residues 302-312 (EDQEQKDEENE) show a composition bias toward acidic residues. Residues 313-330 (EKALHRMREWDDWKDTHP) are compositionally biased toward basic and acidic residues.

The protein belongs to the IGBP1/TAP42 family. Interacts with partially folded PPP2CA, but not with the fully active protein. Interacts with PPP2CB, and with PP4 and PP6. Interacts with MID1 and MID2. Interacts with ubiquitin. In terms of processing, phosphorylated. Post-translationally, monoubiquitination by MID1 triggers calpain-mediated cleavage and switches IGBP1 activity from protective to destructive.

The protein resides in the cytoplasm. Associated to surface IgM-receptor; may be involved in signal transduction. Involved in regulation of the catalytic activity of the phosphatases PP2A, PP4 and PP6 by protecting their partially folded catalytic subunits from degradative polyubiquitination until they associate with regulatory subunits. The polypeptide is Immunoglobulin-binding protein 1 (Igbp1) (Rattus norvegicus (Rat)).